We begin with the raw amino-acid sequence, 196 residues long: uncharacterized protein (196 aa).

Residues 1–21 (MQPEVEPLISPNLGAPGSHRE) are disordered.

This is an uncharacterized protein from Mus musculus (Mouse).